We begin with the raw amino-acid sequence, 3114 residues long: Centromere protein F (3114 aa).

The tract at residues Met1–Met481 is interaction with SNAP25 and required for localization to the cytoplasm. Residues Pro13–Ala131 adopt a coiled-coil conformation. Ser106 is subject to Phosphoserine. Phosphothreonine is present on residues Thr144, Thr151, and Thr154. Tyr158 is modified (phosphotyrosine). Over residues Gln211–Thr235 the composition is skewed to polar residues. A disordered region spans residues Gln211 to Pro236. A phosphoserine mark is found at Ser242 and Ser276. Residues Leu280 to Val685 are a coiled coil. Residues Ser773, Ser783, Ser821, Ser834, Ser838, and Ser876 each carry the phosphoserine modification. 2 coiled-coil regions span residues Val899–Glu989 and Leu1196–Asp1244. Ser1248, Ser1255, and Ser1259 each carry phosphoserine. Residues Val1549–Gln1646 adopt a coiled-coil conformation. A phosphoserine mark is found at Ser1651, Ser1652, and Ser1654. Disordered stretches follow at residues Arg1667 to Val1690 and Thr1710 to Ile1746. A compositionally biased stretch (basic and acidic residues) spans Glu1669 to Val1690. Position 1726 is a phosphoserine (Ser1726). Thr1862 is subject to Phosphothreonine. Ser1868 and Ser1892 each carry phosphoserine. Coiled coils occupy residues Asn1890–Arg2078 and Leu2107–Gln2891. Residues Leu2026 to Asn2351 are interaction with NDE1 and NDEL1. 2 consecutive repeat copies span residues Gln2111–Asp2290 and Ile2293–Ser2472. Residues Gln2111–Ser2472 are 2 X 177 AA tandem repeats. The sufficient for self-association stretch occupies residues Ser2392–Gly2829. The interval Ser2392 to Ala3017 is sufficient for centromere localization. Phosphoserine is present on residues Ser2416 and Ser2417. The residue at position 2779 (Lys2779) is an N6-acetyllysine. The sufficient for nuclear localization stretch occupies residues Val2831–Ala3017. Residues Gln2891–Glu2977 are disordered. Residues Ser2900, Ser2911, Ser2922, and Ser2936 each carry the phosphoserine modification. The Nuclear localization signal motif lies at Lys2919–Ser2936. Thr2949 carries the phosphothreonine modification. A phosphoserine mark is found at Ser2952, Ser2998, Ser3023, and Ser3026. Residues Pro3024–Gln3114 are disordered. Residues Ala3033–Ser3045 show a composition bias toward polar residues. Phosphoserine occurs at positions 3054, 3079, and 3083. Over residues Ser3079–Arg3089 the composition is skewed to basic and acidic residues. A compositionally biased stretch (polar residues) spans Ser3105–Gln3114. The residue at position 3111 (Cys3111) is a Cysteine methyl ester. Cys3111 carries S-farnesyl cysteine lipidation. The propeptide at Lys3112–Gln3114 is removed in mature form.

Belongs to the centromere protein F family. Interacts with and STX4 (via C-terminus). Interacts (via N-terminus) with RBL1, RBL2 and SNAP25. Self-associates. Interacts with CENP-E and BUBR1 (via C-terminus). Interacts (via C-terminus) with NDE1, NDEL1 and RB1. In terms of processing, hyperphosphorylated during mitosis.

It is found in the cytoplasm. It localises to the perinuclear region. Its subcellular location is the nucleus matrix. The protein localises to the chromosome. The protein resides in the centromere. It is found in the kinetochore. It localises to the cytoskeleton. Its subcellular location is the spindle. Its function is as follows. Required for kinetochore function and chromosome segregation in mitosis. Required for kinetochore localization of dynein, LIS1, NDE1 and NDEL1. Regulates recycling of the plasma membrane by acting as a link between recycling vesicles and the microtubule network though its association with STX4 and SNAP25. Acts as a potential inhibitor of pocket protein-mediated cellular processes during development by regulating the activity of RB proteins during cell division and proliferation. May play a regulatory or permissive role in the normal embryonic cardiomyocyte cell cycle and in promoting continued mitosis in transformed, abnormally dividing neonatal cardiomyocytes. Interaction with RB directs embryonic stem cells toward a cardiac lineage. Involved in the regulation of DNA synthesis and hence cell cycle progression, via its C-terminus. Has a potential role regulating skeletal myogenesis and in cell differentiation in embryogenesis. Involved in dendritic cell regulation of T-cell immunity against chlamydia. The sequence is that of Centromere protein F (CENPF) from Homo sapiens (Human).